The primary structure comprises 412 residues: Interferon-inducible GTPase 5 (412 aa).

The IRG-type G domain maps to 51–234 (TRLEVGVTGE…PMLVTTWEHD (184 aa)). Residues 60–67 (ESGAGKSS), 85–89 (TGVVE), and 215–217 (SNL) each bind GTP. Ser246 and Ser303 each carry phosphoserine.

The protein belongs to the TRAFAC class dynamin-like GTPase superfamily. IRG family. In terms of assembly, interacts with PLIN2/ADRP and COX4I1/COXIV. As to expression, expressed in spermatozoa tails from the testis and epididymis, where it may be a component of the fibrous sheath (at protein level).

Its subcellular location is the cell projection. It localises to the cilium. The protein resides in the flagellum. The protein localises to the lipid droplet. The enzyme catalyses GTP + H2O = GDP + phosphate + H(+). Required for sperm motility and therefore male fertility, via positive regulation of spermatozoa fibrous sheath formation. This chain is Interferon-inducible GTPase 5, found in Mus musculus (Mouse).